The primary structure comprises 135 residues: NADPH-dependent 7-cyano-7-deazaguanine reductase (135 aa).

The active-site Thioimide intermediate is the C48. Residue D55 is the Proton donor of the active site. Residues 70 to 72 (IEL) and 89 to 90 (HE) each bind substrate.

This sequence belongs to the GTP cyclohydrolase I family. QueF type 1 subfamily.

The protein resides in the cytoplasm. The enzyme catalyses 7-aminomethyl-7-carbaguanine + 2 NADP(+) = 7-cyano-7-deazaguanine + 2 NADPH + 3 H(+). It participates in tRNA modification; tRNA-queuosine biosynthesis. Its function is as follows. Catalyzes the NADPH-dependent reduction of 7-cyano-7-deazaguanine (preQ0) to 7-aminomethyl-7-deazaguanine (preQ1). In Prochlorococcus marinus (strain MIT 9303), this protein is NADPH-dependent 7-cyano-7-deazaguanine reductase.